The following is a 101-amino-acid chain: Large ribosomal subunit protein P1 (101 aa).

A compositionally biased stretch (low complexity) spans 61–72; the sequence is AAPAAAAAPAAA. The tract at residues 61-101 is disordered; sequence AAPAAAAAPAAAEEAEEEAEEEEEEEEAEEEAAAGLGALFG. A compositionally biased stretch (acidic residues) spans 73 to 92; the sequence is EEAEEEAEEEEEEEEAEEEA.

It belongs to the eukaryotic ribosomal protein P1/P2 family. In terms of assembly, part of the 50S ribosomal subunit. Homodimer, it forms part of the ribosomal stalk which helps the ribosome interact with GTP-bound translation factors. Forms a heptameric uL10/P0(P1)2(P1)2(P1)2 complex, where uL10/P0 forms an elongated spine to which the P1 dimers bind in a sequential fashion.

Forms part of the ribosomal stalk, playing a central role in the interaction of the ribosome with GTP-bound translation factors. The polypeptide is Large ribosomal subunit protein P1 (Methanothermobacter thermautotrophicus (strain ATCC 29096 / DSM 1053 / JCM 10044 / NBRC 100330 / Delta H) (Methanobacterium thermoautotrophicum)).